The primary structure comprises 510 residues: GMP synthase [glutamine-hydrolyzing] (510 aa).

Positions 5–195 (LVIVLDFGGQ…LFNIADLSAD (191 aa)) constitute a Glutamine amidotransferase type-1 domain. C82 (nucleophile) is an active-site residue. Active-site residues include H169 and E171. The 190-residue stretch at 196–385 (WTMGSYIEET…LGLHREIVER (190 aa)) folds into the GMPS ATP-PPase domain. Position 223 to 229 (223 to 229 (SGGIDST)) interacts with ATP.

In terms of assembly, homodimer.

The enzyme catalyses XMP + L-glutamine + ATP + H2O = GMP + L-glutamate + AMP + diphosphate + 2 H(+). It functions in the pathway purine metabolism; GMP biosynthesis; GMP from XMP (L-Gln route): step 1/1. Catalyzes the synthesis of GMP from XMP. The polypeptide is GMP synthase [glutamine-hydrolyzing] (Natranaerobius thermophilus (strain ATCC BAA-1301 / DSM 18059 / JW/NM-WN-LF)).